The sequence spans 377 residues: Chaperone protein DnaJ (377 aa).

Residues 5-70 (DYYEILGVAK…QKRAAYDQFG (66 aa)) enclose the J domain. Residues 130–208 (GTEVKIRVPS…CHGQGRVEEH (79 aa)) form a CR-type zinc finger. Zn(2+)-binding residues include Cys143, Cys146, Cys160, Cys163, Cys182, Cys185, Cys196, and Cys199. CXXCXGXG motif repeat units follow at residues 143–150 (CGECHGSG), 160–167 (CGTCGGVG), 182–189 (CPRCHGTG), and 196–203 (CKACHGQG).

Belongs to the DnaJ family. In terms of assembly, homodimer. The cofactor is Zn(2+).

The protein localises to the cytoplasm. Functionally, participates actively in the response to hyperosmotic and heat shock by preventing the aggregation of stress-denatured proteins and by disaggregating proteins, also in an autonomous, DnaK-independent fashion. Unfolded proteins bind initially to DnaJ; upon interaction with the DnaJ-bound protein, DnaK hydrolyzes its bound ATP, resulting in the formation of a stable complex. GrpE releases ADP from DnaK; ATP binding to DnaK triggers the release of the substrate protein, thus completing the reaction cycle. Several rounds of ATP-dependent interactions between DnaJ, DnaK and GrpE are required for fully efficient folding. Also involved, together with DnaK and GrpE, in the DNA replication of plasmids through activation of initiation proteins. In Thioalkalivibrio sulfidiphilus (strain HL-EbGR7), this protein is Chaperone protein DnaJ.